The sequence spans 110 residues: UPF0060 membrane protein Rpal_4363 (110 aa).

4 helical membrane-spanning segments follow: residues 4–24 (LLTFCAAALMEITGCFAFWAW), 31–51 (PLWLIPGMLALALFAYLLTLA), 59–79 (AYAAYGGIYIASALLWGWAIE), and 88–108 (VIGAAICLVGMSVILFGPRAL).

Belongs to the UPF0060 family.

It is found in the cell inner membrane. This is UPF0060 membrane protein Rpal_4363 from Rhodopseudomonas palustris (strain TIE-1).